The chain runs to 504 residues: Glycerol kinase (504 aa).

Thr16 is a binding site for ADP. Residues Thr16 and Thr17 each contribute to the ATP site. Thr16 contacts sn-glycerol 3-phosphate. Arg20 contributes to the ADP binding site. The sn-glycerol 3-phosphate site is built by Arg86, Glu87, Tyr138, and Asp247. Residues Arg86, Glu87, Tyr138, Asp247, and Gln248 each contribute to the glycerol site. ADP-binding residues include Thr269 and Gly316. Residues Thr269, Gly316, Gln320, and Gly417 each coordinate ATP. Positions 417 and 421 each coordinate ADP.

This sequence belongs to the FGGY kinase family.

It catalyses the reaction glycerol + ATP = sn-glycerol 3-phosphate + ADP + H(+). It participates in polyol metabolism; glycerol degradation via glycerol kinase pathway; sn-glycerol 3-phosphate from glycerol: step 1/1. Its activity is regulated as follows. Inhibited by fructose 1,6-bisphosphate (FBP). In terms of biological role, key enzyme in the regulation of glycerol uptake and metabolism. Catalyzes the phosphorylation of glycerol to yield sn-glycerol 3-phosphate. The sequence is that of Glycerol kinase from Trichodesmium erythraeum (strain IMS101).